We begin with the raw amino-acid sequence, 136 residues long: Large ribosomal subunit protein uL16c (136 aa).

The protein belongs to the universal ribosomal protein uL16 family. In terms of assembly, part of the 50S ribosomal subunit.

It localises to the plastid. It is found in the chloroplast. This Citrus sinensis (Sweet orange) protein is Large ribosomal subunit protein uL16c.